The sequence spans 544 residues: Chaperonin GroEL (544 aa).

Residues 29–32 (TLGP), 86–90 (DGTTT), Gly413, 478–480 (NAA), and Asp494 contribute to the ATP site.

The protein belongs to the chaperonin (HSP60) family. As to quaternary structure, forms a cylinder of 14 subunits composed of two heptameric rings stacked back-to-back. Interacts with the co-chaperonin GroES.

The protein resides in the cytoplasm. The enzyme catalyses ATP + H2O + a folded polypeptide = ADP + phosphate + an unfolded polypeptide.. Its function is as follows. Together with its co-chaperonin GroES, plays an essential role in assisting protein folding. The GroEL-GroES system forms a nano-cage that allows encapsulation of the non-native substrate proteins and provides a physical environment optimized to promote and accelerate protein folding. The chain is Chaperonin GroEL from Lysinibacillus sphaericus (strain C3-41).